The chain runs to 1225 residues: MVDVNRFKSMQITLASPSKVRSWSYGEVKKPETINYRTLKPEREGLFDEVIFGPTKDWECACGKYKRIRYRGIVCDRCGVEVTRTKVRRERMGHIELKAPVSHIWYFKGIPSRMGLTLDMSPRALEEVIYFAAYVVIDPKDTPLEHKSIMTEREYRERLREYGYGSFVAKMGAEAIQDLLKQVDLEKEIAELKEELKTATGQKRVKAIRRLDVLDAFYKSGNKPEWMILNILPVIPPDLRPMLQLDGGRFASSDLNDLYRRVINRNNRLARLLELNAPGIIVQNEKRMLQEAVDALIDNGRRGRPITGPGSRPLKSLSHMLKGKQGRFRQNLLGKRVDFSGRSVIAVGPTLKMYQCGVPREMAIELFKPFVMREIVARDIVQNVKAAKRLVERGDERIWDILEEVIKEHPVLLNRAPTLHRLGIQAFEPVLIDGKALRLHPLVCEAYNADFDGDQMAIHVPLSEEAQAEARILMLAAEHILNPKDGKPVVTPSQDMVLGNYYLTMEEAGREGEGMVFKDRDEAVMAYRNGYVHLHSRVGIATDSLNKPWTEEQRHKVLLTTVGKILFNDIMPEGLPYLQEPNNANLTEGVPAKYFLPLGGDIKEAISNLELNPPFKKKNLGNIIAEIFKRFRTTETSALLDRMKNLGYHHSTLAGLTVGIADIPVVDDKAEIIEESHKRVEQITKQFRRGMITDDERYNAVTAEWRAAREKLEKRLIANQDPKNPIVMMMDSGARGNISNFSQLAGMRGLMAAPNGRIMELPILSNFREGLSVLEMFFSTHGARKGMTDTALKTADSGYLTRRLVDVAQDVIIREDDCGTDRGLLIRSIAEGKEMIESLEERLNGRYTKKTVKHPETGAVIIGPNELITEDKAREIVNAGVEEVTIRSVFTCNTRHGVCRHCYGINLATGDAVEVGEAVGTIAAQSIGEPGTQLTMRTFHTGGVASNTDITQGLPRVQEIFEARNPKGEAVITEVKGQVTAIEEDASTRTKKVFVKGETGEGEYVVPFTARMRVEVGGQVARGAALTEGSIQPKRLLAVRDVLSVETYLLGEVQKVYRSQGVEIGDKHIEVMVRQMIRKVRVMDPGDTDLLMGTLMDINDFTDANKDVLIAGGVPATGRPVLMGITKASLETNSFLSAASFQETTRVLTDAAIRGKKDHLLGLKENVIIGKIIPAGTGMARYRNLEPHAVNEEEYLNPPVEEEGNEETTEVVVDTAVETVEETVE.

Zn(2+)-binding residues include Cys-60, Cys-62, Cys-75, and Cys-78. Mg(2+) contacts are provided by Asp-450, Asp-452, and Asp-454. Residues Cys-818, Cys-892, Cys-899, and Cys-902 each contribute to the Zn(2+) site.

It belongs to the RNA polymerase beta' chain family. In terms of assembly, the RNAP catalytic core consists of 2 alpha, 1 beta, 1 beta' and 1 omega subunit. When a sigma factor is associated with the core the holoenzyme is formed, which can initiate transcription. Mg(2+) is required as a cofactor. It depends on Zn(2+) as a cofactor.

The catalysed reaction is RNA(n) + a ribonucleoside 5'-triphosphate = RNA(n+1) + diphosphate. DNA-dependent RNA polymerase catalyzes the transcription of DNA into RNA using the four ribonucleoside triphosphates as substrates. This chain is DNA-directed RNA polymerase subunit beta', found in Streptococcus pneumoniae (strain Hungary19A-6).